The following is a 1687-amino-acid chain: A-kinase anchor protein 12 (1687 aa).

The disordered stretch occupies residues methionine 1 to alanine 108. Glycine 2 is lipidated: N-myristoyl glycine. Serine 11, serine 18, serine 22, and serine 27 each carry phosphoserine. Residues glycine 30–alanine 48 are compositionally biased toward low complexity. The segment covering proline 52–asparagine 62 has biased composition (polar residues). The span at glutamate 75–aspartate 88 shows a compositional bias: acidic residues. A compositionally biased stretch (basic and acidic residues) spans valine 89–glutamate 105. Phosphoserine is present on residues serine 136 and serine 204. Disordered regions lie at residues serine 175 to serine 282 and lysine 298 to lysine 355. Residues alanine 213–leucine 230 are compositionally biased toward basic and acidic residues. Phosphoserine is present on residues serine 235 and serine 245. The span at glutamine 247–glutamate 259 shows a compositional bias: acidic residues. The interval lysine 254 to serine 544 is involved in PKC-binding. Residues serine 268, serine 271, serine 274, and serine 304 each carry the phosphoserine modification. A compositionally biased stretch (low complexity) spans serine 268–serine 282. Positions lysine 303–glutamate 321 are enriched in basic and acidic residues. Threonine 331 is subject to Phosphothreonine. Acidic residues predominate over residues alanine 334 to threonine 344. Serine 335 and serine 350 each carry phosphoserine. Tyrosine 353 carries the post-translational modification Phosphotyrosine. Serine 371 carries the phosphoserine modification. Positions valine 402 to glycine 481 are disordered. Positions glycine 417–glutamate 426 are enriched in low complexity. Phosphoserine is present on serine 469. Residues proline 470 to glutamate 480 show a composition bias toward basic and acidic residues. Phosphoserine is present on residues serine 491, serine 507, and serine 509. The tract at residues lysine 496–alanine 828 is disordered. The span at glycine 499 to lysine 513 shows a compositional bias: low complexity. The segment covering leucine 514–arginine 523 has biased composition (basic residues). The segment covering glutamate 533 to glycine 550 has biased composition (basic and acidic residues). Phosphoserine is present on residues serine 541, serine 544, serine 585, serine 599, serine 614, and serine 616. The AKAP CaM-binding 1 motif lies at isoleucine 594 to serine 614. A compositionally biased stretch (basic and acidic residues) spans arginine 612–lysine 626. The segment covering alanine 628 to glutamate 639 has biased composition (polar residues). Threonine 629 is modified (phosphothreonine). A phosphoserine mark is found at serine 631, serine 632, serine 635, and serine 638. Over residues aspartate 642 to aspartate 661 the composition is skewed to basic and acidic residues. Serine 683, serine 684, and serine 685 each carry phosphoserine. A compositionally biased stretch (basic and acidic residues) spans aspartate 697–glycine 711. Polar residues predominate over residues alanine 717–glutamine 726. The span at glycine 727–serine 744 shows a compositional bias: low complexity. Serine 736, serine 748, serine 770, serine 771, and serine 789 each carry phosphoserine. The AKAP CaM-binding 2 motif lies at valine 743–leucine 763. The AKAP CaM-binding 3 motif lies at glutamate 784–glycine 804. Threonine 871 is subject to Phosphothreonine. Serine 873 is subject to Phosphoserine. The disordered stretch occupies residues glutamate 959–methionine 981. A Glycyl lysine isopeptide (Lys-Gly) (interchain with G-Cter in SUMO1) cross-link involves residue lysine 1030. A compositionally biased stretch (polar residues) spans valine 1035–glycine 1045. Disordered regions lie at residues valine 1035–alanine 1105, alanine 1125–alanine 1221, cysteine 1277–alanine 1361, and threonine 1443–glutamate 1487. Serine 1059 carries the post-translational modification Phosphoserine. A compositionally biased stretch (polar residues) spans serine 1130–aspartate 1157. The segment covering glutamine 1199–leucine 1211 has biased composition (basic and acidic residues). Serine 1289 is subject to Phosphoserine. Basic and acidic residues predominate over residues aspartate 1298 to glutamine 1310. 3 positions are modified to phosphoserine: serine 1348, serine 1352, and serine 1354. Basic and acidic residues predominate over residues glutamine 1462–glutamate 1487. Residues glutamate 1498–isoleucine 1511 form an RII-binding region. Disordered regions lie at residues glutamate 1522–serine 1582 and isoleucine 1599–serine 1687. Over residues tyrosine 1530–glutamine 1547 the composition is skewed to polar residues. A phosphoserine mark is found at serine 1543 and serine 1571. A compositionally biased stretch (low complexity) spans glutamine 1618–serine 1630. Serine 1637 carries the post-translational modification Phosphoserine. Over residues leucine 1645–serine 1687 the composition is skewed to basic and acidic residues.

As to quaternary structure, binds to dimeric RII-alpha regulatory subunit of PKC. Phosphorylated by PKC (in vitro).

The protein resides in the cytoplasm. Its subcellular location is the cytoskeleton. The protein localises to the membrane. In terms of biological role, anchoring protein that mediates the subcellular compartmentation of protein kinase A (PKA) and protein kinase C (PKC). This chain is A-kinase anchor protein 12 (Akap12), found in Rattus norvegicus (Rat).